The primary structure comprises 110 residues: Putative protein RIG (110 aa).

As to expression, expressed predominantly in brain and weakly in heart and lung. Expression is reduced or undetectable in cultured glioma cells, primary glioblastoma cells and malignant glioblastoma tumors.

In terms of biological role, may serve as a molecular marker for or play a role in the malignant progression of glioblastomas. The protein is Putative protein RIG (RIG) of Homo sapiens (Human).